The sequence spans 125 residues: Kappa-casein (125 aa).

Residues leucine 42–isoleucine 63 are disordered. Residue threonine 97 is glycosylated (O-linked (GalNAc...) threonine). At serine 104 the chain carries Phosphoserine; alternate. A glycan (O-linked (GalNAc...) serine; alternate) is linked at serine 104. O-linked (GalNAc...) threonine glycosylation occurs at threonine 121. The residue at position 122 (serine 122) is a Phosphoserine.

Belongs to the kappa-casein family. As to expression, mammary gland specific. Secreted in milk.

The protein resides in the secreted. Functionally, kappa-casein stabilizes micelle formation, preventing casein precipitation in milk. In Lama guanicoe (Guanaco), this protein is Kappa-casein (CSN3).